A 505-amino-acid polypeptide reads, in one-letter code: Glycerol kinase 2 (505 aa).

Thr-17 provides a ligand contact to ADP. Thr-17, Thr-18, and Ser-19 together coordinate ATP. A sn-glycerol 3-phosphate-binding site is contributed by Thr-17. Arg-21 is a binding site for ADP. 4 residues coordinate sn-glycerol 3-phosphate: Arg-87, Glu-88, Tyr-139, and Asp-249. Arg-87, Glu-88, Tyr-139, Asp-249, and Gln-250 together coordinate glycerol. Positions 271 and 314 each coordinate ADP. 4 residues coordinate ATP: Thr-271, Gly-314, Gln-318, and Gly-415. Gly-415 and Asn-419 together coordinate ADP.

Belongs to the FGGY kinase family.

It carries out the reaction glycerol + ATP = sn-glycerol 3-phosphate + ADP + H(+). Its pathway is polyol metabolism; glycerol degradation via glycerol kinase pathway; sn-glycerol 3-phosphate from glycerol: step 1/1. With respect to regulation, inhibited by fructose 1,6-bisphosphate (FBP). Its function is as follows. Key enzyme in the regulation of glycerol uptake and metabolism. Catalyzes the phosphorylation of glycerol to yield sn-glycerol 3-phosphate. This is Glycerol kinase 2 from Pseudomonas aeruginosa (strain ATCC 15692 / DSM 22644 / CIP 104116 / JCM 14847 / LMG 12228 / 1C / PRS 101 / PAO1).